Here is a 326-residue protein sequence, read N- to C-terminus: Archaeal actin homolog (326 aa).

Residues 10–14 (YGDTK), S179, Q231, 285–288 (GGAN), and Q311 each bind ATP.

Belongs to the thermophilic archaeal actin family.

Its function is as follows. Polymerizes into bundles of filaments. Polymerization requires NTP and is optimal with ATP, but GTP, UTP, CTP, and even the deoxy form of NTP can also support the polymerization reaction. This is Archaeal actin homolog from Thermoplasma volcanium (strain ATCC 51530 / DSM 4299 / JCM 9571 / NBRC 15438 / GSS1).